Consider the following 457-residue polypeptide: Ribosomal protein uS12 methylthiotransferase RimO (457 aa).

The region spanning 6-116 (PKVGFVSLGC…VMEAVHAALP (111 aa)) is the MTTase N-terminal domain. [4Fe-4S] cluster-binding residues include Cys15, Cys51, Cys80, Cys147, Cys151, and Cys154. The 239-residue stretch at 133-371 (LTPRHYAYLK…AKQAQISALR (239 aa)) folds into the Radical SAM core domain. One can recognise a TRAM domain in the interval 373–441 (ESKIGSVQQC…EHDLFGDALP (69 aa)).

This sequence belongs to the methylthiotransferase family. RimO subfamily. It depends on [4Fe-4S] cluster as a cofactor.

The protein localises to the cytoplasm. It catalyses the reaction L-aspartate(89)-[ribosomal protein uS12]-hydrogen + (sulfur carrier)-SH + AH2 + 2 S-adenosyl-L-methionine = 3-methylsulfanyl-L-aspartate(89)-[ribosomal protein uS12]-hydrogen + (sulfur carrier)-H + 5'-deoxyadenosine + L-methionine + A + S-adenosyl-L-homocysteine + 2 H(+). In terms of biological role, catalyzes the methylthiolation of an aspartic acid residue of ribosomal protein uS12. The protein is Ribosomal protein uS12 methylthiotransferase RimO of Xanthomonas axonopodis pv. citri (strain 306).